A 545-amino-acid polypeptide reads, in one-letter code: Cytochrome P450 monooxygenase sdnB (545 aa).

N-linked (GlcNAc...) asparagine glycosylation occurs at asparagine 5. Residues 30-50 (SILALTPLQGIALFLCLFWGY) traverse the membrane as a helical segment. N-linked (GlcNAc...) asparagine glycosylation is present at asparagine 276. Residues 322 to 342 (LPILILIILVPAAHTTAMGIS) traverse the membrane as a helical segment. Asparagine 393 and asparagine 476 each carry an N-linked (GlcNAc...) asparagine glycan. Residue cysteine 486 participates in heme binding.

The protein belongs to the cytochrome P450 family. Heme is required as a cofactor.

Its subcellular location is the membrane. Its pathway is antibiotic biosynthesis. Cytochrome P450 monooxygenase; part of the gene cluster that mediates the biosynthesis of sordarin and hypoxysordarin, glycoside antibiotics with a unique tetracyclic diterpene aglycone structure. First, the geranylgeranyl diphosphate synthase sdnC constructs GGDP from farnesyl diphosphate and isopentenyl diphosphate. The diterpene cyclase sdnA then catalyzes the cyclization of GGDP to afford cycloaraneosene. Cycloaraneosene is then hydroxylated four times by the putative cytochrome P450 monooxygenases sdnB, sdnE, sdnF and sdnH to give a hydroxylated cycloaraneosene derivative such as cycloaraneosene-8,9,13,19-tetraol. Although the order of the hydroxylations is unclear, at least C8, C9 and C13 of the cycloaraneosene skeleton are hydroxylated before the sordaricin formation. Dehydration of the 13-hydroxy group of the hydroxylated cycloaraneosene derivative might be catalyzed by an unassigned hypothetical protein such as sdnG and sdnP to construct the cyclopentadiene moiety. The FAD-dependent oxidoreductase sdnN is proposed to catalyze the oxidation at C9 of the hydroxylated cycloaraneosene derivative and also catalyze the Baeyer-Villiger oxidation to give the lactone intermediate. The presumed lactone intermediate would be hydrolyzed to give an acrolein moiety and a carboxylate moiety. Then, [4+2]cycloaddition would occur between the acrolein moiety and the cyclopentadiene moiety to give sordaricin. SdnN might also be involved in the [4+2]cycloaddition after the hypothesized oxidation to accommodate the oxidized product and prompt the [4+2]cycloaddition. GDP-6-deoxy-D-altrose may be biosynthesized from GDP-D-mannose by the putative GDP-mannose-4,6-dehydratase sdnI and the short-chain dehydrogenase sdnK. The glycosyltransferase sdnJ catalyzes the attachment of 6-deoxy-D-altrose onto the 19-hydroxy group of sordaricin to give 4'-O-demethylsordarin. The methyltransferase sdnD would complete the biosynthesis of sordarin. Sordarin can be further modified into hypoxysordarin. The unique acyl chain at the 3'-hydroxy group of hypoxysordarin would be constructed by an iterative type I PKS sdnO and the trans-acting polyketide methyltransferase sdnL. SdnL would be responsible for the introduction of an alpha-methyl group of the polyketide chain. Alternatively, the beta-lactamase-like protein sdnR might be responsible for the cleavage and transfer of the polyketide chain from the PKS sdnO to sordarin. Two putative cytochrome P450 monooxygenases, sdnQ and sdnT, might catalyze the epoxidations of the polyketide chain to complete the biosynthesis of hypoxysordarin. Transcriptional regulators sdnM and sdnS are presumably encoded for the transcriptional regulation of the expression of the sdn gene cluster. The polypeptide is Cytochrome P450 monooxygenase sdnB (Sordaria araneosa (Pleurage araneosa)).